The chain runs to 354 residues: Rhodopsin (354 aa).

Residues 1-36 lie on the Extracellular side of the membrane; it reads MNGTEGPYFYIPMVNTTGIVRSPYEYPQYYLVNPAA. 2 N-linked (GlcNAc...) asparagine glycosylation sites follow: asparagine 2 and asparagine 15. A helical transmembrane segment spans residues 37-61; it reads YAALGAYMFFLILLGFPINFLTLYV. Residues 62–73 lie on the Cytoplasmic side of the membrane; that stretch reads TLEHKKLRTPLN. The helical transmembrane segment at 74–96 threads the bilayer; sequence YILLNLAVADLFMVFGGFTTTMY. Over 97–110 the chain is Extracellular; the sequence is TSMHGYFVLGRLGC. Cysteines 110 and 187 form a disulfide. Residues 111–133 form a helical membrane-spanning segment; that stretch reads NLEGFFATLGGEIGLWSLVVLAI. The 'Ionic lock' involved in activated form stabilization signature appears at 134–136; that stretch reads ERW. The Cytoplasmic segment spans residues 134–152; sequence ERWVVVCKPISNFRFGENH. Residues 153–173 form a helical membrane-spanning segment; that stretch reads AIMGLAFTWIMACACAVPPLV. Over 174 to 202 the chain is Extracellular; it reads GWSRYIPEGMQCSCGVDYYTRAEGFNNES. A glycan (N-linked (GlcNAc...) asparagine) is linked at asparagine 200. The helical transmembrane segment at 203-224 threads the bilayer; that stretch reads FVVYMFTCHFCIPLTIIGFCYG. Over 225–252 the chain is Cytoplasmic; sequence RLLCAVKEAAAAQQESETTQRAEREVTR. A helical membrane pass occupies residues 253–274; that stretch reads MVILMVVGFLVCWLPYASVAWY. Residues 275–286 are Extracellular-facing; sequence IFSNQGSQFGPL. Residues 287–308 traverse the membrane as a helical segment; that stretch reads FMTIPAFFAKSSSVYNPMIYIC. Lysine 296 is modified (N6-(retinylidene)lysine). The Cytoplasmic segment spans residues 309–354; that stretch reads MNKQFRHCMITTLCCGKNPFEEEEGASTTASKTEASSVSSSSVSPA. 2 S-palmitoyl cysteine lipidation sites follow: cysteine 322 and cysteine 323. The segment at 333–354 is disordered; the sequence is GASTTASKTEASSVSSSSVSPA. Positions 334-354 are enriched in low complexity; sequence ASTTASKTEASSVSSSSVSPA.

Belongs to the G-protein coupled receptor 1 family. Opsin subfamily. Post-translationally, phosphorylated on some or all of the serine and threonine residues present in the C-terminal region. In terms of processing, contains one covalently linked retinal chromophore.

The protein localises to the membrane. Its subcellular location is the cell projection. It is found in the cilium. It localises to the photoreceptor outer segment. Photoreceptor required for image-forming vision at low light intensity. While most salt water fish species use retinal as chromophore, most freshwater fish use 3-dehydroretinal, or a mixture of retinal and 3-dehydroretinal. Light-induced isomerization of 11-cis to all-trans retinal triggers a conformational change that activates signaling via G-proteins. Subsequent receptor phosphorylation mediates displacement of the bound G-protein alpha subunit by arrestin and terminates signaling. This Salaria pavo (Peacock blenny) protein is Rhodopsin (rho).